The chain runs to 168 residues: Photosystem I assembly protein Ycf3 (168 aa).

TPR repeat units follow at residues 35-68 (AFTY…EIDP), 72-105 (SYIL…NSFL), and 120-153 (GEQA…TPGN).

This sequence belongs to the Ycf3 family.

The protein localises to the plastid. The protein resides in the chloroplast thylakoid membrane. In terms of biological role, essential for the assembly of the photosystem I (PSI) complex. May act as a chaperone-like factor to guide the assembly of the PSI subunits. The sequence is that of Photosystem I assembly protein Ycf3 from Jasminum nudiflorum (Winter jasmine).